The chain runs to 320 residues: Thiamine thiazole synthase (320 aa).

Residues C82, 103–104 (EA), G111, and V176 each bind substrate. Position 209 is a 2,3-didehydroalanine (Cys) (C209). Residues D211, H226, M278, and 288–290 (RMG) contribute to the substrate site.

It belongs to the THI4 family. In terms of assembly, homooctamer. Fe cation is required as a cofactor. In terms of processing, during the catalytic reaction, a sulfide is transferred from Cys-209 to a reaction intermediate, generating a dehydroalanine residue.

It localises to the cytoplasm. The protein localises to the nucleus. It carries out the reaction [ADP-thiazole synthase]-L-cysteine + glycine + NAD(+) = [ADP-thiazole synthase]-dehydroalanine + ADP-5-ethyl-4-methylthiazole-2-carboxylate + nicotinamide + 3 H2O + 2 H(+). In terms of biological role, involved in biosynthesis of the thiamine precursor thiazole. Catalyzes the conversion of NAD and glycine to adenosine diphosphate 5-(2-hydroxyethyl)-4-methylthiazole-2-carboxylic acid (ADT), an adenylated thiazole intermediate. The reaction includes an iron-dependent sulfide transfer from a conserved cysteine residue of the protein to a thiazole intermediate. The enzyme can only undergo a single turnover, which suggests it is a suicide enzyme. May have additional roles in adaptation to various stress conditions and in DNA damage tolerance. The polypeptide is Thiamine thiazole synthase (sti35) (Fusarium oxysporum f. sp. lycopersici (strain 4287 / CBS 123668 / FGSC 9935 / NRRL 34936) (Fusarium vascular wilt of tomato)).